Reading from the N-terminus, the 613-residue chain is Dihydroxy-acid dehydratase (613 aa).

Asp-81 is a binding site for Mg(2+). Cys-122 is a binding site for [2Fe-2S] cluster. Positions 123 and 124 each coordinate Mg(2+). At Lys-124 the chain carries N6-carboxylysine. Cys-195 is a [2Fe-2S] cluster binding site. Glu-491 contributes to the Mg(2+) binding site. Residue Ser-517 is the Proton acceptor of the active site.

This sequence belongs to the IlvD/Edd family. In terms of assembly, homodimer. [2Fe-2S] cluster is required as a cofactor. It depends on Mg(2+) as a cofactor.

The catalysed reaction is (2R)-2,3-dihydroxy-3-methylbutanoate = 3-methyl-2-oxobutanoate + H2O. The enzyme catalyses (2R,3R)-2,3-dihydroxy-3-methylpentanoate = (S)-3-methyl-2-oxopentanoate + H2O. Its pathway is amino-acid biosynthesis; L-isoleucine biosynthesis; L-isoleucine from 2-oxobutanoate: step 3/4. The protein operates within amino-acid biosynthesis; L-valine biosynthesis; L-valine from pyruvate: step 3/4. In terms of biological role, functions in the biosynthesis of branched-chain amino acids. Catalyzes the dehydration of (2R,3R)-2,3-dihydroxy-3-methylpentanoate (2,3-dihydroxy-3-methylvalerate) into 2-oxo-3-methylpentanoate (2-oxo-3-methylvalerate) and of (2R)-2,3-dihydroxy-3-methylbutanoate (2,3-dihydroxyisovalerate) into 2-oxo-3-methylbutanoate (2-oxoisovalerate), the penultimate precursor to L-isoleucine and L-valine, respectively. This Vibrio vulnificus (strain CMCP6) protein is Dihydroxy-acid dehydratase.